We begin with the raw amino-acid sequence, 553 residues long: Dihydrolipoyllysine-residue acetyltransferase component of pyruvate dehydrogenase complex (553 aa).

The 76-residue stretch at 2–77 (AFSVQMPALG…EVGGELAVIG (76 aa)) folds into the Lipoyl-binding 1 domain. K43 carries the post-translational modification N6-lipoyllysine. The interval 81–125 (DAGEAAAPAPEKVPAAQPESKPAPEPPPVQPTSGAPAGGDAKPVL) is disordered. The span at 84 to 100 (EAAAPAPEKVPAAQPES) shows a compositional bias: low complexity. Residues 101 to 110 (KPAPEPPPVQ) show a composition bias toward pro residues. The Lipoyl-binding 2 domain maps to 121-196 (AKPVLMPELG…PVGGELARIG (76 aa)). K162 is modified (N6-lipoyllysine). Disordered stretches follow at residues 204-238 (APAPKPAPKPVPEPAPTPKAEPAPSPPAAQPAGAA) and 278-321 (AAAE…TQKA). Residues 206–232 (APKPAPKPVPEPAPTPKAEPAPSPPAA) are compositionally biased toward pro residues. The Peripheral subunit-binding (PSBD) domain occupies 243 to 280 (YVTPLVRKLASENNIDLAGVTGTGVGGRIRKQDVLAAA). The segment covering 288 to 300 (APAPAAQAAAAPA) has biased composition (low complexity). Active-site residues include H523 and D527.

It belongs to the 2-oxoacid dehydrogenase family. In terms of assembly, forms a 24-polypeptide structural core with octahedral symmetry. Part of the PDH complex, consisting of multiple copies of AceE (E1), DlaT (E2) and Lpd (E3). Requires (R)-lipoate as cofactor.

The enzyme catalyses N(6)-[(R)-dihydrolipoyl]-L-lysyl-[protein] + acetyl-CoA = N(6)-[(R)-S(8)-acetyldihydrolipoyl]-L-lysyl-[protein] + CoA. In terms of biological role, component of the pyruvate dehydrogenase (PDH) complex, that catalyzes the overall conversion of pyruvate to acetyl-CoA and CO(2). This Mycobacterium bovis (strain ATCC BAA-935 / AF2122/97) protein is Dihydrolipoyllysine-residue acetyltransferase component of pyruvate dehydrogenase complex (dlaT).